The primary structure comprises 596 residues: Nitrite reductase (596 aa).

An N-terminal signal peptide occupies residues Met-1–Ala-29. Residues Gln-30 to Pro-76 form an N-terminal tail region. Residue His-46 participates in heme c binding. Residues Tyr-54 and Ser-57 each coordinate heme d1. The Cytochrome c domain maps to Ala-77–Ala-162. Heme c contacts are provided by Cys-94, Cys-97, His-98, Lys-108, and Tyr-122. Residues Trp-138, Arg-203, His-229, Arg-232, Arg-245, Arg-272, Tyr-292, Arg-420, Gln-536, and Thr-583 each coordinate heme d1. The tract at residues Pro-163 to Tyr-596 is D1-heme domain.

Homodimer. Heme c is required as a cofactor. The cofactor is heme.

It localises to the periplasm. The enzyme catalyses nitric oxide + Fe(III)-[cytochrome c] + H2O = Fe(II)-[cytochrome c] + nitrite + 2 H(+). The catalysed reaction is A + NH4(+) + H2O = hydroxylamine + AH2 + H(+). Functionally, inactivation of this cytochrome oxidase results in the loss of nitrite and nitric oxide reductase activities, but not of nitrous oxide reductase activity. The sequence is that of Nitrite reductase (nirS) from Paracoccus denitrificans (strain Pd 1222).